The primary structure comprises 196 residues: MKVNPNNIELIISAVKEEQYPETELSEVALSGRSNVGKSTFINSMIGRKNMARTSQQPGKTQTLNFYNIDEQLIFVDVPGYGYAKVSKTQREKFGKMIEEYITKRENLQLVIQLVDLRHDPTQDDILMYNYLKHFDIPTLVICTKEDKIPKGKVQKHIKNIKTQLDMDPDDTIVSYSSIQNNKQQQIWNLIEPYIS.

The 173-residue stretch at 24–196 folds into the EngB-type G domain; it reads ELSEVALSGR…IWNLIEPYIS (173 aa). GTP contacts are provided by residues 32-39, 59-63, 77-80, 144-147, and 176-178; these read GRSNVGKS, GKTQT, DVPG, TKED, and YSS. Residues Ser-39 and Thr-61 each coordinate Mg(2+).

Belongs to the TRAFAC class TrmE-Era-EngA-EngB-Septin-like GTPase superfamily. EngB GTPase family. The cofactor is Mg(2+).

Functionally, necessary for normal cell division and for the maintenance of normal septation. In Staphylococcus aureus (strain Mu3 / ATCC 700698), this protein is Probable GTP-binding protein EngB.